Consider the following 331-residue polypeptide: Phenylalanine--tRNA ligase alpha subunit (331 aa).

E252 is a Mg(2+) binding site.

It belongs to the class-II aminoacyl-tRNA synthetase family. Phe-tRNA synthetase alpha subunit type 1 subfamily. As to quaternary structure, tetramer of two alpha and two beta subunits. Requires Mg(2+) as cofactor.

The protein resides in the cytoplasm. It carries out the reaction tRNA(Phe) + L-phenylalanine + ATP = L-phenylalanyl-tRNA(Phe) + AMP + diphosphate + H(+). This Hahella chejuensis (strain KCTC 2396) protein is Phenylalanine--tRNA ligase alpha subunit.